The sequence spans 286 residues: uncharacterized protein (286 aa).

This is an uncharacterized protein from Acidianus sp. F28 (AFV-2).